The primary structure comprises 868 residues: Receptor-like protein 32 (868 aa).

The N-terminal stretch at 1–32 is a signal peptide; it reads MKDSWNSTSIIPFTFSSLIFFLFTFDFQDVFG. The Extracellular portion of the chain corresponds to 33–815; the sequence is VPTKHLCRLE…PPELEEEDRE (783 aa). N-linked (GlcNAc...) asparagine glycosylation is found at N73, N109, N141, and N165. LRR repeat units follow at residues 118–142, 143–166, 168–188, 189–213, 214–237, 239–261, 262–285, 287–310, 312–334, 335–360, 362–385, 389–412, 413–436, 438–459, 465–489, 490–515, 517–538, 540–560, 561–586, 588–606, 607–630, 675–699, 700–723, 724–747, and 749–772; these read LRFLTTLDLSYNYFSGQIPSCIENF, SHLTTLDLSKNYFSGGIPSSIGNL, QLTFLDLSGNEFVGEMPFFGN, MNQLTNLYVDSNDLTGIFPLSLLNL, KHLSDLSLSRNQFTGTLPSNMSSL, NLEYFEAWGNAFTGTLPSSLFTI, ASLTSINLRNNQLNGTLEFGNISS, STLTVLDISNNNFIGPIPKSISKF, NLQDLDLSHLNTQGPVDFSIFTN, LKSLQLLNLSHLNTTTTIDLNALFSS, LNSIYSMDLSGNHVSATTKISVAD, TQLISQLYLSGCGITEFPELLRSQ, HKMTNLDISNNKIKGQVPGWLWTL, KLIFVDLSNNIFTGFERSTEHG, KPSMQYLVGSNNNFTGKIPSFICAL, RSLITLDLSDNNLNGSIPPCMGNLKS, LSFLNLRQNRLGGGLPRSIFKS, RSLDVGHNQLVGKLPRSFIRL, SALEVLNVENNRINDTFPFWLSSLKK, QVLVLRSNAFHGPIHHASF, HTLRIINLSHNQFSGTLPANYFVN, LKIYTALDFSENKLEGEIPRSIGLL, KELHVLNLSSNAFTGHIPSSMGNL, RELESLDVSQNKLSGEIPQELGNL, and YLAYMNFSHNQLGGLVPGGTQFRR. Residue N233 is glycosylated (N-linked (GlcNAc...) asparagine). Residues N275 and N282 are each glycosylated (N-linked (GlcNAc...) asparagine). N-linked (GlcNAc...) asparagine glycosylation is found at N342 and N347. N-linked (GlcNAc...) asparagine glycans are attached at residues N477 and N503. A glycan (N-linked (GlcNAc...) asparagine) is linked at N574. N613 carries an N-linked (GlcNAc...) asparagine glycan. N-linked (GlcNAc...) asparagine glycosylation is found at N706, N746, N754, and N774. Residues 816 to 836 form a helical membrane-spanning segment; it reads VFSWIAAAIGFGPGIAFGLTI. The Cytoplasmic segment spans residues 837 to 868; it reads RYILVFYKPDWFMHTFGHLQPSAHEKRLRRKQ.

Belongs to the RLP family.

The protein resides in the cell membrane. The sequence is that of Receptor-like protein 32 from Arabidopsis thaliana (Mouse-ear cress).